The sequence spans 301 residues: MNPLKKKPRTHSLQNAPEKPDWLKVKLAFPDPKNNPVAIVRNSLEEKKLNTVCESASCPNLNHCWSRKTATYMLGGDICTRRCSYCDVASGKPFPLDPEEPKRIAESSIALDLRHVVITSVNRDDLEDGGAAHFAKTVKEIRKGLPDCKIELLIPDLKVKQEALEIIFECNPDIFNHNLETVKRLFPEVAPQKRYERSLDVLKIASARGFLTKSGLILGMGETLEEVKECMQDLASVGVSLLTLGQYLQPTSTHLPVKEYVVPQVFKDLRIYGKSIGFKGVFSGPLVRSSYHADEQISWNP.

[4Fe-4S] cluster-binding residues include Cys-53, Cys-58, Cys-64, Cys-79, Cys-83, Cys-86, and Ser-290. Residues 65–279 (WSRKTATYML…RIYGKSIGFK (215 aa)) enclose the Radical SAM core domain.

The protein belongs to the radical SAM superfamily. Lipoyl synthase family. [4Fe-4S] cluster serves as cofactor.

The protein resides in the cytoplasm. It catalyses the reaction [[Fe-S] cluster scaffold protein carrying a second [4Fe-4S](2+) cluster] + N(6)-octanoyl-L-lysyl-[protein] + 2 oxidized [2Fe-2S]-[ferredoxin] + 2 S-adenosyl-L-methionine + 4 H(+) = [[Fe-S] cluster scaffold protein] + N(6)-[(R)-dihydrolipoyl]-L-lysyl-[protein] + 4 Fe(3+) + 2 hydrogen sulfide + 2 5'-deoxyadenosine + 2 L-methionine + 2 reduced [2Fe-2S]-[ferredoxin]. It functions in the pathway protein modification; protein lipoylation via endogenous pathway; protein N(6)-(lipoyl)lysine from octanoyl-[acyl-carrier-protein]: step 2/2. Functionally, catalyzes the radical-mediated insertion of two sulfur atoms into the C-6 and C-8 positions of the octanoyl moiety bound to the lipoyl domains of lipoate-dependent enzymes, thereby converting the octanoylated domains into lipoylated derivatives. The sequence is that of Lipoyl synthase from Leptospira interrogans serogroup Icterohaemorrhagiae serovar Lai (strain 56601).